The sequence spans 490 residues: ATP synthase subunit beta, plastid (490 aa).

ATP is bound at residue 170 to 177 (GGAGVGKT).

It belongs to the ATPase alpha/beta chains family. F-type ATPases have 2 components, CF(1) - the catalytic core - and CF(0) - the membrane proton channel. CF(1) has five subunits: alpha(3), beta(3), gamma(1), delta(1), epsilon(1). CF(0) has four main subunits: a(1), b(1), b'(1) and c(9-12).

It is found in the plastid membrane. It catalyses the reaction ATP + H2O + 4 H(+)(in) = ADP + phosphate + 5 H(+)(out). In terms of biological role, produces ATP from ADP in the presence of a proton gradient across the membrane. The catalytic sites are hosted primarily by the beta subunits. This is ATP synthase subunit beta, plastid (atpB) from Cuscuta japonica (Japanese dodder).